We begin with the raw amino-acid sequence, 288 residues long: Elongation factor Ts (288 aa).

An involved in Mg(2+) ion dislocation from EF-Tu region spans residues 82-85 (TDFV).

This sequence belongs to the EF-Ts family.

Its subcellular location is the cytoplasm. Functionally, associates with the EF-Tu.GDP complex and induces the exchange of GDP to GTP. It remains bound to the aminoacyl-tRNA.EF-Tu.GTP complex up to the GTP hydrolysis stage on the ribosome. This Chlorobaculum tepidum (strain ATCC 49652 / DSM 12025 / NBRC 103806 / TLS) (Chlorobium tepidum) protein is Elongation factor Ts.